Reading from the N-terminus, the 115-residue chain is Large ribosomal subunit protein bL21 (115 aa).

It belongs to the bacterial ribosomal protein bL21 family. Part of the 50S ribosomal subunit. Contacts protein L20.

This protein binds to 23S rRNA in the presence of protein L20. This Coxiella burnetii (strain RSA 331 / Henzerling II) protein is Large ribosomal subunit protein bL21.